Consider the following 288-residue polypeptide: Oxaloacetate decarboxylase (288 aa).

Residue serine 47 participates in substrate binding. Residue aspartate 85 participates in Mg(2+) binding. Substrate contacts are provided by arginine 156 and histidine 232.

It belongs to the isocitrate lyase/PEP mutase superfamily. Oxaloacetate decarboxylase family. Homotetramer; dimer of dimers. Mg(2+) is required as a cofactor.

The catalysed reaction is oxaloacetate + H(+) = pyruvate + CO2. In terms of biological role, catalyzes the decarboxylation of oxaloacetate into pyruvate. Seems to play a role in maintaining cellular concentrations of bicarbonate and pyruvate. The protein is Oxaloacetate decarboxylase of Bradyrhizobium diazoefficiens (strain JCM 10833 / BCRC 13528 / IAM 13628 / NBRC 14792 / USDA 110).